We begin with the raw amino-acid sequence, 151 residues long: Nucleoside diphosphate kinase (151 aa).

Residues K11, F59, R87, T93, R104, and N114 each contribute to the ATP site. H117 acts as the Pros-phosphohistidine intermediate in catalysis.

Belongs to the NDK family. In terms of assembly, homotetramer. Mg(2+) serves as cofactor.

Its subcellular location is the cytoplasm. It catalyses the reaction a 2'-deoxyribonucleoside 5'-diphosphate + ATP = a 2'-deoxyribonucleoside 5'-triphosphate + ADP. The catalysed reaction is a ribonucleoside 5'-diphosphate + ATP = a ribonucleoside 5'-triphosphate + ADP. Major role in the synthesis of nucleoside triphosphates other than ATP. The ATP gamma phosphate is transferred to the NDP beta phosphate via a ping-pong mechanism, using a phosphorylated active-site intermediate. The chain is Nucleoside diphosphate kinase from Prochlorococcus marinus (strain SARG / CCMP1375 / SS120).